The following is a 349-amino-acid chain: Methionine import ATP-binding protein MetN (349 aa).

In terms of domain architecture, ABC transporter spans 5 to 245 (IDLKNITVQF…PQKQLTRQFV (241 aa)). An ATP-binding site is contributed by 37–44 (GFSGAGKS).

The protein belongs to the ABC transporter superfamily. Methionine importer (TC 3.A.1.24) family. The complex is composed of two ATP-binding proteins (MetN), two transmembrane proteins (MetI) and a solute-binding protein (MetQ).

Its subcellular location is the cell membrane. The enzyme catalyses L-methionine(out) + ATP + H2O = L-methionine(in) + ADP + phosphate + H(+). It catalyses the reaction D-methionine(out) + ATP + H2O = D-methionine(in) + ADP + phosphate + H(+). Functionally, part of the ABC transporter complex MetNIQ involved in methionine import. Responsible for energy coupling to the transport system. The protein is Methionine import ATP-binding protein MetN of Lactobacillus johnsonii (strain CNCM I-12250 / La1 / NCC 533).